A 131-amino-acid polypeptide reads, in one-letter code: Sulfurtransferase TusD (131 aa).

Catalysis depends on Cys81, which acts as the Cysteine persulfide intermediate.

Belongs to the DsrE/TusD family. In terms of assembly, heterohexamer, formed by a dimer of trimers. The hexameric TusBCD complex contains 2 copies each of TusB, TusC and TusD. The TusBCD complex interacts with TusE.

Its subcellular location is the cytoplasm. Part of a sulfur-relay system required for 2-thiolation of 5-methylaminomethyl-2-thiouridine (mnm(5)s(2)U) at tRNA wobble positions. Accepts sulfur from TusA and transfers it in turn to TusE. This Yersinia pseudotuberculosis serotype O:1b (strain IP 31758) protein is Sulfurtransferase TusD.